We begin with the raw amino-acid sequence, 138 residues long: Putative pre-16S rRNA nuclease (138 aa).

It belongs to the YqgF nuclease family.

It is found in the cytoplasm. Functionally, could be a nuclease involved in processing of the 5'-end of pre-16S rRNA. The chain is Putative pre-16S rRNA nuclease from Salmonella typhimurium (strain LT2 / SGSC1412 / ATCC 700720).